A 115-amino-acid polypeptide reads, in one-letter code: Large ribosomal subunit protein bL19 (115 aa).

This sequence belongs to the bacterial ribosomal protein bL19 family.

Its function is as follows. This protein is located at the 30S-50S ribosomal subunit interface and may play a role in the structure and function of the aminoacyl-tRNA binding site. This Finegoldia magna (strain ATCC 29328 / DSM 20472 / WAL 2508) (Peptostreptococcus magnus) protein is Large ribosomal subunit protein bL19.